The primary structure comprises 442 residues: Coiled-coil domain-containing protein 91 (442 aa).

Residues M1–D16 form a GGA1-binding motif region. The tract at residues M1 to P27 is disordered. S43 and S46 each carry phosphoserine. The tract at residues E48–S79 is disordered. 2 coiled-coil regions span residues G127–I213 and C248–Q409. The segment at L211 to R414 is homodimerization.

Homodimer. Interacts with GGA1, GGA2 and AP1G1.

It localises to the membrane. Its subcellular location is the golgi apparatus. It is found in the trans-Golgi network membrane. The protein resides in the trans-Golgi network. Functionally, involved in the regulation of membrane traffic through the trans-Golgi network (TGN). Functions in close cooperation with the GGAs in the sorting of hydrolases to lysosomes. This is Coiled-coil domain-containing protein 91 (Ccdc91) from Rattus norvegicus (Rat).